The primary structure comprises 1092 residues: Isoleucine--tRNA ligase (1092 aa).

The 'HIGH' region motif lies at 53–63 (PFANGLPHYGH). A 'KMSKS' region motif is present at residues 613–617 (KLSKR). An ATP-binding site is contributed by lysine 616.

It belongs to the class-I aminoacyl-tRNA synthetase family. IleS type 2 subfamily. As to quaternary structure, monomer. It depends on Zn(2+) as a cofactor.

It localises to the cytoplasm. The catalysed reaction is tRNA(Ile) + L-isoleucine + ATP = L-isoleucyl-tRNA(Ile) + AMP + diphosphate. Functionally, catalyzes the attachment of isoleucine to tRNA(Ile). As IleRS can inadvertently accommodate and process structurally similar amino acids such as valine, to avoid such errors it has two additional distinct tRNA(Ile)-dependent editing activities. One activity is designated as 'pretransfer' editing and involves the hydrolysis of activated Val-AMP. The other activity is designated 'posttransfer' editing and involves deacylation of mischarged Val-tRNA(Ile). The polypeptide is Isoleucine--tRNA ligase (Rickettsia conorii (strain ATCC VR-613 / Malish 7)).